We begin with the raw amino-acid sequence, 103 residues long: uncharacterized protein (103 aa).

It localises to the plastid. Its subcellular location is the chloroplast. This is an uncharacterized protein from Auxenochlorella pyrenoidosa (Freshwater green alga).